Here is a 184-residue protein sequence, read N- to C-terminus: Endothelial cell-specific molecule 1 (184 aa).

Positions 1–21 (MKSLLLLTTLLIPLHLGMAWS) are cleaved as a signal peptide. Residues 24–102 (YAVDCPEHCD…GDEFGVCKDC (79 aa)) form the IGFBP N-terminal domain. Intrachain disulfides connect Cys28–Cys51, Cys32–Cys53, Cys37–Cys54, Cys43–Cys57, Cys65–Cys83, and Cys77–Cys99. The interval 145 to 184 (RTSASQTERDAASGDGNAVREEIGDRNAARPSVMKWLNPR) is disordered. Residues 151–172 (TERDAASGDGNAVREEIGDRNA) are compositionally biased toward basic and acidic residues. Ser157 is a glycosylation site (O-linked (Xyl...) (chondroitin sulfate) serine).

In terms of processing, O-glycosylated; contains chondroitin sulfate and dermatan sulfate. As to expression, pineal gland specific.

It is found in the secreted. In terms of biological role, involved in angiogenesis; promotes angiogenic sprouting. May have potent implications in lung endothelial cell-leukocyte interactions. The sequence is that of Endothelial cell-specific molecule 1 (Esm1) from Rattus norvegicus (Rat).